A 294-amino-acid polypeptide reads, in one-letter code: ATP synthase gamma chain (294 aa).

Belongs to the ATPase gamma chain family. As to quaternary structure, F-type ATPases have 2 components, CF(1) - the catalytic core - and CF(0) - the membrane proton channel. CF(1) has five subunits: alpha(3), beta(3), gamma(1), delta(1), epsilon(1). CF(0) has three main subunits: a, b and c.

The protein resides in the cell inner membrane. Produces ATP from ADP in the presence of a proton gradient across the membrane. The gamma chain is believed to be important in regulating ATPase activity and the flow of protons through the CF(0) complex. The chain is ATP synthase gamma chain from Nitratiruptor sp. (strain SB155-2).